Here is a 71-residue protein sequence, read N- to C-terminus: Large ribosomal subunit protein uL29 (71 aa).

It belongs to the universal ribosomal protein uL29 family.

This chain is Large ribosomal subunit protein uL29, found in Methanocella arvoryzae (strain DSM 22066 / NBRC 105507 / MRE50).